A 327-amino-acid chain; its full sequence is Malate dehydrogenase (327 aa).

12–18 (GAAGQIG) serves as a coordination point for NAD(+). 2 residues coordinate substrate: Arg-93 and Arg-99. NAD(+) is bound by residues Asn-106, Gln-113, and 130-132 (VGN). The substrate site is built by Asn-132 and Arg-163. The active-site Proton acceptor is His-188.

This sequence belongs to the LDH/MDH superfamily. MDH type 2 family.

The catalysed reaction is (S)-malate + NAD(+) = oxaloacetate + NADH + H(+). Functionally, catalyzes the reversible oxidation of malate to oxaloacetate. The polypeptide is Malate dehydrogenase (Paraburkholderia phymatum (strain DSM 17167 / CIP 108236 / LMG 21445 / STM815) (Burkholderia phymatum)).